The chain runs to 170 residues: UPF0201 protein MJ1564 (170 aa).

Acidic residues predominate over residues 133 to 148; sequence NEDELEEEEEKEDSEE. The interval 133–170 is disordered; it reads NEDELEEEEEKEDSEEIKEGHKEENNLKIKVIDNSSGD. The segment covering 149–163 has biased composition (basic and acidic residues); it reads IKEGHKEENNLKIKV.

The protein belongs to the UPF0201 family.

This chain is UPF0201 protein MJ1564, found in Methanocaldococcus jannaschii (strain ATCC 43067 / DSM 2661 / JAL-1 / JCM 10045 / NBRC 100440) (Methanococcus jannaschii).